Here is a 421-residue protein sequence, read N- to C-terminus: D-aspartate ligase (421 aa).

Residues 130-332 form the ATP-grasp domain; that stretch reads YEVCEEYDLP…LARFVTEDRV (203 aa). 161-224 contributes to the ATP binding site; that stretch reads PFEFPVALKP…QDFIPGDDSN (64 aa). Asp290, Glu304, and Asn306 together coordinate Mg(2+).

Requires Mg(2+) as cofactor.

It carries out the reaction [beta-GlcNAc-(1-&gt;4)-Mur2Ac(oyl-L-Ala-gamma-D-Glu-L-Lys-D-Ala-D-Ala)](n) + n D-aspartate + n ATP = [beta-GlcNAc-(1-&gt;4)-Mur2Ac(oyl-L-Ala-gamma-D-Glu-6-N-(beta-D-Asp)-L-Lys-D-Ala-D-Ala)]n + n ADP + n phosphate + n H(+). It participates in cell wall biogenesis; peptidoglycan biosynthesis. Functionally, catalyzes the addition of D-aspartate onto the lysine residue in the peptidoglycan precursor UDP-MurNAc-pentapeptide. The ligation occurs between the beta-carboxylate of D-Asp and the epsilon-amino group of L-Lys. Is highly specific for D-aspartate, as L-aspartate, D-glutamate, D-alanine, D-iso-asparagine and D-malate are not substrates. The sequence is that of D-aspartate ligase from Enterococcus faecium (strain Aus0004).